The following is a 322-amino-acid chain: Peroxidase 66 (322 aa).

An N-terminal signal peptide occupies residues 1-24 (MAFSKGLIFAMIFAVLAIVKPSEA). 2 cysteine pairs are disulfide-bonded: Cys-35/Cys-114 and Cys-68/Cys-73. The active-site Proton acceptor is His-66. Asp-67, Gly-72, Asp-74, and Ser-76 together coordinate Ca(2+). Asn-155 carries N-linked (GlcNAc...) asparagine glycosylation. Pro-161 contacts substrate. A glycan (N-linked (GlcNAc...) asparagine) is linked at Asn-166. His-191 contacts heme b. Residue Thr-192 coordinates Ca(2+). A disulfide bridge links Cys-198 with Cys-230. Asn-207 is a glycosylation site (N-linked (GlcNAc...) asparagine). 3 residues coordinate Ca(2+): Asp-245, Thr-247, and Asp-252.

It belongs to the peroxidase family. Classical plant (class III) peroxidase subfamily. Heme b serves as cofactor. Requires Ca(2+) as cofactor.

It localises to the secreted. The catalysed reaction is 2 a phenolic donor + H2O2 = 2 a phenolic radical donor + 2 H2O. In terms of biological role, removal of H(2)O(2), oxidation of toxic reductants, biosynthesis and degradation of lignin, suberization, auxin catabolism, response to environmental stresses such as wounding, pathogen attack and oxidative stress. These functions might be dependent on each isozyme/isoform in each plant tissue. The chain is Peroxidase 66 (PER66) from Arabidopsis thaliana (Mouse-ear cress).